Here is a 37-residue protein sequence, read N- to C-terminus: Defensin-A (37 aa).

3 cysteine pairs are disulfide-bonded: Cys-4-Cys-25, Cys-10-Cys-33, and Cys-14-Cys-35.

It localises to the secreted. In terms of biological role, has antibacterial activity against M.luteus and E.coli. This chain is Defensin-A, found in Mytilus edulis (Blue mussel).